A 1375-amino-acid chain; its full sequence is DNA-directed RNA polymerase subunit beta (1375 aa).

Belongs to the RNA polymerase beta chain family. As to quaternary structure, the RNAP catalytic core consists of 2 alpha, 1 beta, 1 beta' and 1 omega subunit. When a sigma factor is associated with the core the holoenzyme is formed, which can initiate transcription.

It catalyses the reaction RNA(n) + a ribonucleoside 5'-triphosphate = RNA(n+1) + diphosphate. Its function is as follows. DNA-dependent RNA polymerase catalyzes the transcription of DNA into RNA using the four ribonucleoside triphosphates as substrates. In Coxiella burnetii (strain Dugway 5J108-111), this protein is DNA-directed RNA polymerase subunit beta.